A 113-amino-acid chain; its full sequence is uncharacterized protein (113 aa).

Residues 16–96 (LVDNETRCFH…STVHCKYCNH (81 aa)) form a CHY-type; degenerate zinc finger. Zn(2+)-binding residues include Cys23, His25, Cys46, Cys49, Cys73, Cys76, Cys91, and Cys94.

The protein localises to the cytoplasm. Its subcellular location is the nucleus. This is an uncharacterized protein from Schizosaccharomyces pombe (strain 972 / ATCC 24843) (Fission yeast).